A 194-amino-acid chain; its full sequence is Adenylate kinase (194 aa).

Residue 8 to 16 (GIPGVGKST) participates in ATP binding.

Belongs to the archaeal adenylate kinase family. In terms of assembly, homotrimer.

It localises to the cytoplasm. It carries out the reaction AMP + ATP = 2 ADP. This chain is Adenylate kinase (adkA), found in Sulfolobus acidocaldarius (strain ATCC 33909 / DSM 639 / JCM 8929 / NBRC 15157 / NCIMB 11770).